A 379-amino-acid polypeptide reads, in one-letter code: Flap endonuclease 1 (379 aa).

The interval 1 to 105 is N-domain; sequence MGIKGLTKLL…QELAKRYSKR (105 aa). Aspartate 34 lines the Mg(2+) pocket. Arginine 71 serves as a coordination point for DNA. Mg(2+) is bound by residues aspartate 87, glutamate 159, glutamate 161, aspartate 180, and aspartate 182. The I-domain stretch occupies residues 123–254; the sequence is AIEKLSKRTV…QTALKLIRQH (132 aa). Glutamate 159 lines the DNA pocket. DNA contacts are provided by glycine 232 and aspartate 234. Aspartate 234 contributes to the Mg(2+) binding site. The interval 331 to 379 is disordered; it reads AKNKSSQGRLESFFKPTATTSAPLKRKETSDKTSKAAANKKTKAGGKKK. An interaction with PCNA region spans residues 336 to 344; that stretch reads SQGRLESFF. The segment covering 355–364 has biased composition (basic and acidic residues); sequence KRKETSDKTS. Residues 368 to 379 are compositionally biased toward basic residues; it reads ANKKTKAGGKKK.

The protein belongs to the XPG/RAD2 endonuclease family. FEN1 subfamily. Interacts with PCNA. Three molecules of FEN1 bind to one PCNA trimer with each molecule binding to one PCNA monomer. PCNA stimulates the nuclease activity without altering cleavage specificity. Mg(2+) serves as cofactor. Post-translationally, phosphorylated. Phosphorylation upon DNA damage induces relocalization to the nuclear plasma.

It localises to the nucleus. It is found in the nucleolus. The protein localises to the nucleoplasm. Its subcellular location is the mitochondrion. In terms of biological role, structure-specific nuclease with 5'-flap endonuclease and 5'-3' exonuclease activities involved in DNA replication and repair. During DNA replication, cleaves the 5'-overhanging flap structure that is generated by displacement synthesis when DNA polymerase encounters the 5'-end of a downstream Okazaki fragment. It enters the flap from the 5'-end and then tracks to cleave the flap base, leaving a nick for ligation. Also involved in the long patch base excision repair (LP-BER) pathway, by cleaving within the apurinic/apyrimidinic (AP) site-terminated flap. Acts as a genome stabilization factor that prevents flaps from equilibrating into structures that lead to duplications and deletions. Also possesses 5'-3' exonuclease activity on nicked or gapped double-stranded DNA, and exhibits RNase H activity. Also involved in replication and repair of rDNA and in repairing mitochondrial DNA. In Zea mays (Maize), this protein is Flap endonuclease 1.